Here is a 717-residue protein sequence, read N- to C-terminus: HHIP-like protein 2 (717 aa).

The N-terminal stretch at 1–40 (MLGKHTSPHTVPGHRAPWLSPGIFCLGLPFLLGWVGLLQG) is a signal peptide. 4 cysteine pairs are disulfide-bonded: Cys-203-Cys-545, Cys-207-Cys-551, Cys-423-Cys-441, and Cys-508-Cys-607. Residues 642-717 (ARKASNATFT…MRQAAGRSHP (76 aa)) are disordered. The segment covering 646-662 (SNATFTSSSDRVASQKG) has biased composition (polar residues). N-linked (GlcNAc...) asparagine glycosylation is present at Asn-647. The segment covering 672–687 (SSKKTFRRPGTKKKSR) has biased composition (basic residues).

The protein belongs to the HHIP family.

It is found in the secreted. The polypeptide is HHIP-like protein 2 (Hhipl2) (Mus musculus (Mouse)).